The primary structure comprises 426 residues: Serine--tRNA ligase (426 aa).

Position 233–235 (233–235 (TSE)) interacts with L-serine. Residue 264–266 (RAE) participates in ATP binding. An L-serine-binding site is contributed by Glu-287. An ATP-binding site is contributed by 351-354 (EISS). L-serine is bound at residue Ser-387.

Belongs to the class-II aminoacyl-tRNA synthetase family. Type-1 seryl-tRNA synthetase subfamily. Homodimer. The tRNA molecule binds across the dimer.

The protein localises to the cytoplasm. It catalyses the reaction tRNA(Ser) + L-serine + ATP = L-seryl-tRNA(Ser) + AMP + diphosphate + H(+). The enzyme catalyses tRNA(Sec) + L-serine + ATP = L-seryl-tRNA(Sec) + AMP + diphosphate + H(+). Its pathway is aminoacyl-tRNA biosynthesis; selenocysteinyl-tRNA(Sec) biosynthesis; L-seryl-tRNA(Sec) from L-serine and tRNA(Sec): step 1/1. Functionally, catalyzes the attachment of serine to tRNA(Ser). Is also able to aminoacylate tRNA(Sec) with serine, to form the misacylated tRNA L-seryl-tRNA(Sec), which will be further converted into selenocysteinyl-tRNA(Sec). This chain is Serine--tRNA ligase, found in Xanthomonas campestris pv. campestris (strain 8004).